Reading from the N-terminus, the 142-residue chain is HTH-type transcriptional regulator LysM (142 aa).

Residues 6–69 (IDESDLKILE…ELENEIRAIV (64 aa)) form the HTH asnC-type domain. The H-T-H motif DNA-binding region spans 25–44 (YTLIAKELKVSEAAIRKRIE).

In terms of assembly, homotetramer.

It localises to the cytoplasm. The protein operates within amino-acid biosynthesis; L-lysine biosynthesis via AAA pathway [regulation]. Its function is as follows. In the absence or at low concentrations of lysine, activates the biosynthesis of this amino acid via the alpha-aminoadipate (AAA) pathway. This is HTH-type transcriptional regulator LysM (lysM) from Saccharolobus solfataricus (strain ATCC 35092 / DSM 1617 / JCM 11322 / P2) (Sulfolobus solfataricus).